We begin with the raw amino-acid sequence, 303 residues long: tRNA pseudouridine synthase-like 1 (303 aa).

Residue Asp-66 is the Nucleophile of the active site. Position 84 is a phosphoserine (Ser-84). Tyr-130 provides a ligand contact to substrate.

It belongs to the tRNA pseudouridine synthase TruA family.

The catalysed reaction is a uridine in tRNA = a pseudouridine in tRNA. This Homo sapiens (Human) protein is tRNA pseudouridine synthase-like 1 (PUSL1).